We begin with the raw amino-acid sequence, 75 residues long: Sec-independent protein translocase protein TatA (75 aa).

Residues 1 to 21 (MGISIWQLLIVLGIVILLFGT) traverse the membrane as a helical segment. The disordered stretch occupies residues 41-75 (SMSDEEEKNAEQQPLEKQNAEQQAQAEDKPKEKQG). The span at 56–65 (EKQNAEQQAQ) shows a compositional bias: low complexity. A compositionally biased stretch (basic and acidic residues) spans 66–75 (AEDKPKEKQG).

Belongs to the TatA/E family. In terms of assembly, the Tat system comprises two distinct complexes: a TatABC complex, containing multiple copies of TatA, TatB and TatC subunits, and a separate TatA complex, containing only TatA subunits. Substrates initially bind to the TatABC complex, which probably triggers association of the separate TatA complex to form the active translocon.

Its subcellular location is the cell inner membrane. Functionally, part of the twin-arginine translocation (Tat) system that transports large folded proteins containing a characteristic twin-arginine motif in their signal peptide across membranes. TatA could form the protein-conducting channel of the Tat system. In Marinobacter nauticus (strain ATCC 700491 / DSM 11845 / VT8) (Marinobacter aquaeolei), this protein is Sec-independent protein translocase protein TatA.